Reading from the N-terminus, the 374-residue chain is Guanine nucleotide-binding protein subunit alpha-15 (374 aa).

Positions glutamate 41 to leucine 374 constitute a G-alpha domain. The G1 motif stretch occupies residues lysine 44–threonine 57. GTP is bound by residues glycine 49–serine 56, leucine 183–threonine 189, aspartate 208–glutamine 212, asparagine 277–aspartate 280, and alanine 346. Serine 56 and threonine 189 together coordinate Mg(2+). The tract at residues aspartate 181 to threonine 189 is G2 motif. Residues leucine 204–arginine 213 are G3 motif. The G4 motif stretch occupies residues isoleucine 273–aspartate 280. The segment at threonine 344–threonine 349 is G5 motif.

It belongs to the G-alpha family. G(q) subfamily. As to quaternary structure, g proteins are composed of 3 units; alpha, beta and gamma. The alpha chain contains the guanine nucleotide binding site. In terms of tissue distribution, expressed primarily in hematopoietic cells. Coexpressed with EDG6 at the same relative levels in all tissues examined, with the highest levels in adult spleen and lung.

In terms of biological role, guanine nucleotide-binding proteins (G proteins) are involved as modulators or transducers in various transmembrane signaling systems. The protein is Guanine nucleotide-binding protein subunit alpha-15 (Gna15) of Mus musculus (Mouse).